The primary structure comprises 450 residues: Phosphoglucosamine mutase (450 aa).

Serine 97 functions as the Phosphoserine intermediate in the catalytic mechanism. Residues serine 97, aspartate 236, aspartate 238, and aspartate 240 each coordinate Mg(2+). Serine 97 carries the post-translational modification Phosphoserine.

Belongs to the phosphohexose mutase family. The cofactor is Mg(2+). In terms of processing, activated by phosphorylation.

The catalysed reaction is alpha-D-glucosamine 1-phosphate = D-glucosamine 6-phosphate. Catalyzes the conversion of glucosamine-6-phosphate to glucosamine-1-phosphate. The chain is Phosphoglucosamine mutase from Prochlorococcus marinus (strain AS9601).